Reading from the N-terminus, the 426-residue chain is D-tagatose-1,6-bisphosphate aldolase subunit KbaZ (426 aa).

Belongs to the GatZ/KbaZ family. KbaZ subfamily. In terms of assembly, forms a complex with KbaY.

It participates in carbohydrate metabolism; D-tagatose 6-phosphate degradation; D-glyceraldehyde 3-phosphate and glycerone phosphate from D-tagatose 6-phosphate: step 2/2. Its function is as follows. Component of the tagatose-1,6-bisphosphate aldolase KbaYZ that is required for full activity and stability of the Y subunit. Could have a chaperone-like function for the proper and stable folding of KbaY. When expressed alone, KbaZ does not show any aldolase activity. This chain is D-tagatose-1,6-bisphosphate aldolase subunit KbaZ, found in Escherichia fergusonii (strain ATCC 35469 / DSM 13698 / CCUG 18766 / IAM 14443 / JCM 21226 / LMG 7866 / NBRC 102419 / NCTC 12128 / CDC 0568-73).